Here is a 268-residue protein sequence, read N- to C-terminus: Tryptophan synthase alpha chain (268 aa).

Residues glutamate 49 and aspartate 60 each act as proton acceptor in the active site.

It belongs to the TrpA family. As to quaternary structure, tetramer of two alpha and two beta chains.

It catalyses the reaction (1S,2R)-1-C-(indol-3-yl)glycerol 3-phosphate + L-serine = D-glyceraldehyde 3-phosphate + L-tryptophan + H2O. It participates in amino-acid biosynthesis; L-tryptophan biosynthesis; L-tryptophan from chorismate: step 5/5. In terms of biological role, the alpha subunit is responsible for the aldol cleavage of indoleglycerol phosphate to indole and glyceraldehyde 3-phosphate. In Yersinia enterocolitica serotype O:8 / biotype 1B (strain NCTC 13174 / 8081), this protein is Tryptophan synthase alpha chain.